Consider the following 49-residue polypeptide: Glycolactin (49 aa).

Belongs to the pancreatic ribonuclease family. In terms of processing, glycosylated. Milk.

Its subcellular location is the secreted. Manifests poly C-specific RNase activity toward yeast tRNA, elicits a dose-dependent inhibition of cell-free translation, inhibits formation of superoxide ions in vitro and inhibits the hemagglutinating activities of soybean lectin and Ricinus communis agglutinin 120. Inhibits HIV-1 reverse transcriptase. This chain is Glycolactin, found in Bos taurus (Bovine).